The chain runs to 217 residues: Large ribosomal subunit protein eL6 (217 aa).

Belongs to the eukaryotic ribosomal protein eL6 family. In terms of assembly, component of the large ribosomal subunit. May bind IPO9 with low affinity.

The protein resides in the cytoplasm. It is found in the cytosol. Its subcellular location is the rough endoplasmic reticulum. Component of the large ribosomal subunit. The chain is Large ribosomal subunit protein eL6 (rpl-6) from Caenorhabditis elegans.